A 325-amino-acid chain; its full sequence is Cell division protein ZipA (325 aa).

Over 1–5 (MQELR) the chain is Periplasmic. A helical membrane pass occupies residues 6–26 (LVLILVGALAIAALLFHGLWT). At 27–325 (SRKETSSKFG…KQRVKVFCRK (299 aa)) the chain is on the cytoplasmic side.

Belongs to the ZipA family. As to quaternary structure, interacts with FtsZ via their C-terminal domains.

It is found in the cell inner membrane. In terms of biological role, essential cell division protein that stabilizes the FtsZ protofilaments by cross-linking them and that serves as a cytoplasmic membrane anchor for the Z ring. Also required for the recruitment to the septal ring of downstream cell division proteins. This is Cell division protein ZipA from Aliivibrio fischeri (strain MJ11) (Vibrio fischeri).